Consider the following 383-residue polypeptide: Probable transcriptional repressor C1348.12 (383 aa).

Residues 34–60 (CVICRSKKQKCDGQLPCLYCKKYEYQC) constitute a DNA-binding region (zn(2)-C6 fungal-type).

It localises to the nucleus. In terms of biological role, probable transcriptional repressor of multidrug resistance genes. This is Probable transcriptional repressor C1348.12 from Schizosaccharomyces pombe (strain 972 / ATCC 24843) (Fission yeast).